A 239-amino-acid chain; its full sequence is Large ribosomal subunit protein uL2 (239 aa).

Residues 200 to 239 form a disordered region; the sequence is VNHPHGGKEHHIGRPSTVSRRAPPGRKVGHIAARRTGRRK. Basic residues predominate over residues 222–239; the sequence is PPGRKVGHIAARRTGRRK.

This sequence belongs to the universal ribosomal protein uL2 family. As to quaternary structure, part of the 50S ribosomal subunit. Forms a bridge to the 30S subunit in the 70S ribosome.

One of the primary rRNA binding proteins. Required for association of the 30S and 50S subunits to form the 70S ribosome, for tRNA binding and peptide bond formation. It has been suggested to have peptidyltransferase activity; this is somewhat controversial. Makes several contacts with the 16S rRNA in the 70S ribosome. The polypeptide is Large ribosomal subunit protein uL2 (Thermococcus gammatolerans (strain DSM 15229 / JCM 11827 / EJ3)).